The following is a 27-amino-acid chain: iraD leader peptide (27 aa).

In terms of biological role, a short protein whose stop codon overlaps with the start codon of downstream iraD; its mRNA secondary structure is predicted to fold and sequester the Shine-Dalgarno sequence of iraD. When this protein is expressed the downstream iraD is also expressed due to ribosomal coupling. The chain is iraD leader peptide (idlP) from Escherichia coli (strain K12).